The chain runs to 417 residues: Serine hydroxymethyltransferase (417 aa).

(6S)-5,6,7,8-tetrahydrofolate-binding positions include L121 and 125–127 (GHL). The residue at position 229 (K229) is an N6-(pyridoxal phosphate)lysine. 355-357 (SPF) contacts (6S)-5,6,7,8-tetrahydrofolate.

It belongs to the SHMT family. As to quaternary structure, homodimer. Requires pyridoxal 5'-phosphate as cofactor.

The protein localises to the cytoplasm. The catalysed reaction is (6R)-5,10-methylene-5,6,7,8-tetrahydrofolate + glycine + H2O = (6S)-5,6,7,8-tetrahydrofolate + L-serine. It functions in the pathway one-carbon metabolism; tetrahydrofolate interconversion. It participates in amino-acid biosynthesis; glycine biosynthesis; glycine from L-serine: step 1/1. Functionally, catalyzes the reversible interconversion of serine and glycine with tetrahydrofolate (THF) serving as the one-carbon carrier. This reaction serves as the major source of one-carbon groups required for the biosynthesis of purines, thymidylate, methionine, and other important biomolecules. Also exhibits THF-independent aldolase activity toward beta-hydroxyamino acids, producing glycine and aldehydes, via a retro-aldol mechanism. The chain is Serine hydroxymethyltransferase from Salmonella arizonae (strain ATCC BAA-731 / CDC346-86 / RSK2980).